We begin with the raw amino-acid sequence, 404 residues long: Serine/threonine transporter SstT (404 aa).

9 helical membrane passes run 17–37, 39–59, 75–95, 138–158, 179–199, 212–232, 287–307, 319–339, and 354–374; these read IGIG…VTAI, ILGQ…VFAL, MTLI…VAVI, ALAT…GLAL, IVVW…FSTV, LLIL…NPLL, IPLG…VLTL, FLTA…ASGV, and FGIS…VGVI.

The protein belongs to the dicarboxylate/amino acid:cation symporter (DAACS) (TC 2.A.23) family.

It localises to the cell membrane. It carries out the reaction L-serine(in) + Na(+)(in) = L-serine(out) + Na(+)(out). It catalyses the reaction L-threonine(in) + Na(+)(in) = L-threonine(out) + Na(+)(out). In terms of biological role, involved in the import of serine and threonine into the cell, with the concomitant import of sodium (symport system). The protein is Serine/threonine transporter SstT of Streptococcus equi subsp. equi (strain 4047).